The chain runs to 231 residues: eRF1 methyltransferase catalytic subunit mtq2 (231 aa).

Residues 54–58 (GCGSG), aspartate 80, and asparagine 130 contribute to the S-adenosyl-L-methionine site. Position 130-133 (130-133 (NPPY)) interacts with substrate.

This sequence belongs to the eukaryotic/archaeal PrmC-related family. Heterodimer of mtq2-trm112. mtq2 is the catalytic subunit carrying the catalytic and the S-adenosyl L-methionine binding sites.

It localises to the cytoplasm. Its subcellular location is the nucleus. It carries out the reaction L-glutaminyl-[peptide chain release factor] + S-adenosyl-L-methionine = N(5)-methyl-L-glutaminyl-[peptide chain release factor] + S-adenosyl-L-homocysteine + H(+). In terms of biological role, methylates eRF1 on 'Gln-182' using S-adenosyl L-methionine as methyl donor. eRF1 needs to be complexed to eRF3 in its GTP-bound form to be efficiently methylated. The sequence is that of eRF1 methyltransferase catalytic subunit mtq2 (mtq2) from Schizosaccharomyces pombe (strain 972 / ATCC 24843) (Fission yeast).